The chain runs to 305 residues: Putative F-box protein PP2-B8 (305 aa).

In terms of domain architecture, F-box spans 33 to 79 (VAELDDLPEECVSIIVSFTSPQDACVLASVSKTFASAVKSDIVWEKF).

The protein is Putative F-box protein PP2-B8 (PP2B8) of Arabidopsis thaliana (Mouse-ear cress).